A 448-amino-acid polypeptide reads, in one-letter code: T-box transcription factor T homolog 1 (448 aa).

The segment at residues 54–224 (LWDKFNALTN…YNPFAKAFLD (171 aa)) is a DNA-binding region (T-box). Disordered stretches follow at residues 290–312 (APYPHPYQRSSPPTNYGHDTAAS) and 401–448 (TTAS…PPSL). Residues 417–442 (STDSGYGHSTTPPAPQTRITSNNWSP) show a composition bias toward polar residues.

It is found in the nucleus. In terms of biological role, involved in the transcriptional regulation of genes required for mesoderm formation and differentiation. The protein is T-box transcription factor T homolog 1 of Branchiostoma floridae (Florida lancelet).